A 574-amino-acid chain; its full sequence is DNA-directed primase/polymerase protein (574 aa).

Positions 2–22 (KRKWEERVKKVEELASYYERN) form a coiled coil. Substrate is bound by residues arginine 76, 116–118 (DLE), 167–171 (KFSRH), 291–294 (RNFR), and lysine 300. 2 residues coordinate Mn(2+): aspartate 116 and glutamate 118. Zn(2+) is bound by residues cysteine 424, histidine 431, cysteine 451, and cysteine 456. The Zinc knuckle motif motif lies at 424–457 (CENIGRAHRSNNIMILVDLKKEVWYQKCHDPVCR).

Belongs to the eukaryotic-type primase small subunit family. Mn(2+) serves as cofactor.

The protein resides in the nucleus. It is found in the mitochondrion matrix. It localises to the chromosome. The catalysed reaction is ssDNA + n NTP = ssDNA/pppN(pN)n-1 hybrid + (n-1) diphosphate.. It catalyses the reaction DNA(n) + a 2'-deoxyribonucleoside 5'-triphosphate = DNA(n+1) + diphosphate. Functionally, DNA primase and DNA polymerase required to tolerate replication-stalling lesions by bypassing them. Required to facilitate mitochondrial and nuclear replication fork progression by initiating de novo DNA synthesis using dNTPs and acting as an error-prone DNA polymerase able to bypass certain DNA lesions. Shows a high capacity to tolerate DNA damage lesions such as 8oxoG and abasic sites in DNA. Provides different translesion synthesis alternatives when DNA replication is stalled: able to synthesize DNA primers downstream of lesions, such as UV lesions, R-loops and G-quadruplexes, to allow DNA replication to continue. Can also realign primers ahead of 'unreadable lesions' such as abasic sites and 6-4 photoproduct (6-4 pyrimidine-pyrimidinone), thereby skipping the lesion. Repriming avoids fork degradation while leading to accumulation of internal ssDNA gaps behind the forks. Also able to incorporate nucleotides opposite DNA lesions such as 8oxoG, like a regular translesion synthesis DNA polymerase. Also required for reinitiating stalled forks after ultraviolet (UV) damage during nuclear DNA replication. Required for mitochondrial DNA (mtDNA) synthesis and replication, by reinitiating synthesis after UV damage or in the presence of chain-terminating nucleotides. In addition to its role in DNA damage response, also required to maintain efficient nuclear and mitochondrial DNA replication in unperturbed cells. The protein is DNA-directed primase/polymerase protein of Gallus gallus (Chicken).